The following is a 161-amino-acid chain: Large-conductance mechanosensitive channel (161 aa).

Transmembrane regions (helical) follow at residues 21–41 (VGVIIGAAFNGIVKSLVDGVI) and 79–99 (GAFINTVIQFLIVAVVVFLLV). Low complexity predominate over residues 142-154 (TAAPKAAAAPVAK). The tract at residues 142-161 (TAAPKAAAAPVAKPKTKPKA) is disordered.

It belongs to the MscL family. In terms of assembly, homopentamer.

The protein localises to the cell inner membrane. In terms of biological role, channel that opens in response to stretch forces in the membrane lipid bilayer. May participate in the regulation of osmotic pressure changes within the cell. The protein is Large-conductance mechanosensitive channel of Caulobacter sp. (strain K31).